Consider the following 333-residue polypeptide: tRNA dimethylallyltransferase (333 aa).

Residue 16-23 participates in ATP binding; the sequence is GPTASGKT. Substrate is bound at residue 18–23; sequence TASGKT. Interaction with substrate tRNA regions lie at residues 41–44, 165–169, and 253–258; these read DSAL, QRISR, and RCVGYR.

This sequence belongs to the IPP transferase family. In terms of assembly, monomer. The cofactor is Mg(2+).

It catalyses the reaction adenosine(37) in tRNA + dimethylallyl diphosphate = N(6)-dimethylallyladenosine(37) in tRNA + diphosphate. In terms of biological role, catalyzes the transfer of a dimethylallyl group onto the adenine at position 37 in tRNAs that read codons beginning with uridine, leading to the formation of N6-(dimethylallyl)adenosine (i(6)A). The protein is tRNA dimethylallyltransferase of Polaromonas sp. (strain JS666 / ATCC BAA-500).